We begin with the raw amino-acid sequence, 337 residues long: Diacylglycerol O-acyltransferase 2-like protein 6 (337 aa).

Helical transmembrane passes span Met-22–Phe-42 and Tyr-102–Thr-122.

It belongs to the diacylglycerol acyltransferase family.

It is found in the endoplasmic reticulum membrane. It carries out the reaction 1,2-di-(9Z-octadecenoyl)-sn-glycerol + (9Z)-octadecenoyl-CoA = 1,2,3-tri-(9Z-octadecenoyl)-glycerol + CoA. Functionally, diglyceride acyltransferase that uses fatty acyl-CoA as substrate. Particularly active with oleate as a substrate. Has no wax synthase activity to produce wax esters. This chain is Diacylglycerol O-acyltransferase 2-like protein 6 (DGAT2L6), found in Bos taurus (Bovine).